Reading from the N-terminus, the 419-residue chain is Enolase (419 aa).

Gln161 contributes to the (2R)-2-phosphoglycerate binding site. Glu205 acts as the Proton donor in catalysis. Residues Asp240, Glu283, and Asp309 each contribute to the Mg(2+) site. (2R)-2-phosphoglycerate contacts are provided by Lys334, Arg363, Ser364, and Lys385. Lys334 (proton acceptor) is an active-site residue.

This sequence belongs to the enolase family. Requires Mg(2+) as cofactor.

It localises to the cytoplasm. Its subcellular location is the secreted. The protein resides in the cell surface. The catalysed reaction is (2R)-2-phosphoglycerate = phosphoenolpyruvate + H2O. It participates in carbohydrate degradation; glycolysis; pyruvate from D-glyceraldehyde 3-phosphate: step 4/5. Functionally, catalyzes the reversible conversion of 2-phosphoglycerate (2-PG) into phosphoenolpyruvate (PEP). It is essential for the degradation of carbohydrates via glycolysis. The sequence is that of Enolase from Saccharolobus islandicus (strain L.S.2.15 / Lassen #1) (Sulfolobus islandicus).